The following is a 394-amino-acid chain: Flavohemoprotein (394 aa).

In terms of domain architecture, Globin spans 1–138; that stretch reads MLTQEHINII…LAQVFIDREG (138 aa). H85 provides a ligand contact to heme b. Active-site charge relay system residues include Y95 and E137. The interval 149 to 394 is reductase; the sequence is GGWRDGRTFV…VFGPHAQLAA (246 aa). The region spanning 152–262 is the FAD-binding FR-type domain; the sequence is RDGRTFVVRE…YAPAGDFFYV (111 aa). Residues Y190 and 206–209 contribute to the FAD site; that span reads RQYS. 274 to 279 is an NADP(+) binding site; the sequence is GVGATP. 385 to 388 contributes to the FAD binding site; sequence VFGP.

The protein belongs to the globin family. Two-domain flavohemoproteins subfamily. It in the C-terminal section; belongs to the flavoprotein pyridine nucleotide cytochrome reductase family. Heme b is required as a cofactor. Requires FAD as cofactor.

The catalysed reaction is 2 nitric oxide + NADPH + 2 O2 = 2 nitrate + NADP(+) + H(+). It carries out the reaction 2 nitric oxide + NADH + 2 O2 = 2 nitrate + NAD(+) + H(+). Its function is as follows. Is involved in NO detoxification in an aerobic process, termed nitric oxide dioxygenase (NOD) reaction that utilizes O(2) and NAD(P)H to convert NO to nitrate, which protects the bacterium from various noxious nitrogen compounds. Therefore, plays a central role in the inducible response to nitrosative stress. This chain is Flavohemoprotein (hmp), found in Vibrio cholerae serotype O1 (strain ATCC 39315 / El Tor Inaba N16961).